The chain runs to 326 residues: tRNA(Ile)-lysidine synthase (326 aa).

Residue 33-38 coordinates ATP; that stretch reads SGGPDS.

The protein belongs to the tRNA(Ile)-lysidine synthase family.

Its subcellular location is the cytoplasm. The catalysed reaction is cytidine(34) in tRNA(Ile2) + L-lysine + ATP = lysidine(34) in tRNA(Ile2) + AMP + diphosphate + H(+). Ligates lysine onto the cytidine present at position 34 of the AUA codon-specific tRNA(Ile) that contains the anticodon CAU, in an ATP-dependent manner. Cytidine is converted to lysidine, thus changing the amino acid specificity of the tRNA from methionine to isoleucine. The sequence is that of tRNA(Ile)-lysidine synthase from Novosphingobium aromaticivorans (strain ATCC 700278 / DSM 12444 / CCUG 56034 / CIP 105152 / NBRC 16084 / F199).